The sequence spans 289 residues: Inorganic pyrophosphatase (289 aa).

Ser2 bears the N-acetylserine mark. Residue Lys57 is modified to N6-acetyllysine. Residues Asp116, Asp121, and Asp153 each contribute to the Mg(2+) site. Residue Lys228 is modified to N6-acetyllysine. Ser250 carries the post-translational modification Phosphoserine.

It belongs to the PPase family. As to quaternary structure, homodimer. The cofactor is Mg(2+).

It is found in the cytoplasm. The catalysed reaction is diphosphate + H2O = 2 phosphate + H(+). This chain is Inorganic pyrophosphatase (PPA1), found in Pongo abelii (Sumatran orangutan).